The sequence spans 136 residues: Serine--glyoxylate aminotransferase (136 aa).

The protein belongs to the class-V pyridoxal-phosphate-dependent aminotransferase family. As to quaternary structure, homodimer. Pyridoxal 5'-phosphate serves as cofactor. Expressed in leaves but not in root tissue or seedlings.

The protein resides in the peroxisome. The catalysed reaction is glyoxylate + L-serine = 3-hydroxypyruvate + glycine. The enzyme catalyses glyoxylate + L-alanine = glycine + pyruvate. Its activity is regulated as follows. Inhibited by aminooxyacetate. The polypeptide is Serine--glyoxylate aminotransferase (Zea mays (Maize)).